Here is a 285-residue protein sequence, read N- to C-terminus: Bifunctional protein FolD (285 aa).

NADP(+)-binding positions include 166 to 168, serine 191, and threonine 232; that span reads GRS.

Belongs to the tetrahydrofolate dehydrogenase/cyclohydrolase family. Homodimer.

The catalysed reaction is (6R)-5,10-methylene-5,6,7,8-tetrahydrofolate + NADP(+) = (6R)-5,10-methenyltetrahydrofolate + NADPH. It carries out the reaction (6R)-5,10-methenyltetrahydrofolate + H2O = (6R)-10-formyltetrahydrofolate + H(+). Its pathway is one-carbon metabolism; tetrahydrofolate interconversion. In terms of biological role, catalyzes the oxidation of 5,10-methylenetetrahydrofolate to 5,10-methenyltetrahydrofolate and then the hydrolysis of 5,10-methenyltetrahydrofolate to 10-formyltetrahydrofolate. This is Bifunctional protein FolD from Chloroflexus aggregans (strain MD-66 / DSM 9485).